The chain runs to 126 residues: uncharacterized protein (126 aa).

This is an uncharacterized protein from Escherichia coli (strain K12).